A 252-amino-acid chain; its full sequence is F-box/SPRY domain-containing protein 1 (252 aa).

The region spanning 1–48 is the F-box domain; sequence MVDPLCNYNVLEAIFSYLELSDLSRCSQVCKSWYHFLNDENSDVWRWH. The 193-residue stretch at 58 to 250 folds into the B30.2/SPRY domain; sequence IKSDLLASVT…VSMVYLGTPL (193 aa).

The protein belongs to the FBXO45/Fsn family. In terms of assembly, component of an E3 ubiquitin ligase complex composed of hiw and Fsn.

Its subcellular location is the synapse. It functions in the pathway protein modification; protein ubiquitination. In terms of biological role, required in the presynaptic motoneuron to down-regulate the levels of wnd and restrain synaptic terminal growth at the neuromuscular junction (NMJ). The polypeptide is F-box/SPRY domain-containing protein 1 (Drosophila mojavensis (Fruit fly)).